The chain runs to 648 residues: 60 kDa heat shock protein homolog 1, mitochondrial (648 aa).

The N-terminal 55 residues, 1-55, are a transit peptide targeting the mitochondrion; the sequence is MFRSCVPKAITSSRCFARMYSKDVRFGSGVRAMMIRGVDILADAVAVTMGPKGRS.

Belongs to the chaperonin (HSP60) family.

The protein localises to the mitochondrion matrix. Its function is as follows. Prevents misfolding and promotes the refolding and proper assembly of unfolded polypeptides generated under stress conditions. In Drosophila melanogaster (Fruit fly), this protein is 60 kDa heat shock protein homolog 1, mitochondrial (Hsp60B).